An 89-amino-acid polypeptide reads, in one-letter code: MRCGCLACDGVLCANGPGRPRRPALTCTAVATRTLHSLATNAELVESADLTVTEDICSRIVSLPVHDHMAIADVARVVAPFGEGLARGG.

It to M.tuberculosis Rv3402c.

This is an uncharacterized protein from Mycobacterium tuberculosis (strain CDC 1551 / Oshkosh).